A 351-amino-acid polypeptide reads, in one-letter code: Pentatricopeptide repeat-containing protein At3g56030, mitochondrial (351 aa).

A mitochondrion-targeting transit peptide spans Met1–Phe41. PPR repeat units follow at residues Arg124–Leu158, Ser159–Val193, Asp194–Glu224, and Asp232–Val266.

Belongs to the PPR family. P subfamily.

The protein resides in the mitochondrion. This is Pentatricopeptide repeat-containing protein At3g56030, mitochondrial from Arabidopsis thaliana (Mouse-ear cress).